Here is a 637-residue protein sequence, read N- to C-terminus: 1-deoxy-D-xylulose-5-phosphate synthase (637 aa).

Thiamine diphosphate is bound by residues histidine 76 and alanine 117–serine 119. Position 148 (aspartate 148) interacts with Mg(2+). Thiamine diphosphate contacts are provided by residues glycine 149–alanine 150, asparagine 177, tyrosine 287, and glutamate 369. A Mg(2+)-binding site is contributed by asparagine 177.

It belongs to the transketolase family. DXPS subfamily. As to quaternary structure, homodimer. It depends on Mg(2+) as a cofactor. The cofactor is thiamine diphosphate.

The enzyme catalyses D-glyceraldehyde 3-phosphate + pyruvate + H(+) = 1-deoxy-D-xylulose 5-phosphate + CO2. The protein operates within metabolic intermediate biosynthesis; 1-deoxy-D-xylulose 5-phosphate biosynthesis; 1-deoxy-D-xylulose 5-phosphate from D-glyceraldehyde 3-phosphate and pyruvate: step 1/1. Its function is as follows. Catalyzes the acyloin condensation reaction between C atoms 2 and 3 of pyruvate and glyceraldehyde 3-phosphate to yield 1-deoxy-D-xylulose-5-phosphate (DXP). This is 1-deoxy-D-xylulose-5-phosphate synthase from Pelagibacter ubique (strain HTCC1062).